The sequence spans 130 residues: Transcription antitermination protein NusB (130 aa).

Belongs to the NusB family.

Involved in transcription antitermination. Required for transcription of ribosomal RNA (rRNA) genes. Binds specifically to the boxA antiterminator sequence of the ribosomal RNA (rrn) operons. This is Transcription antitermination protein NusB from Bacillus cereus (strain ATCC 10987 / NRS 248).